Consider the following 146-residue polypeptide: MNRGALIKLVESRYVRTDLPEFRPGDTVRVSYKVKEGNRTRIQDFEGIVIRIRRNGFNTTFTVRKVSYGVGVERIFPLHSPLIQKIDIVQRGRARRAKLYFIRNLSDREIRRKLRADRKRIDQDRAAERAAKEEAQKAQEPKASQE.

Positions 116-146 (ADRKRIDQDRAAERAAKEEAQKAQEPKASQE) are disordered. A compositionally biased stretch (basic and acidic residues) spans 119-146 (KRIDQDRAAERAAKEEAQKAQEPKASQE).

In terms of assembly, part of the 50S risobomal subunit. Contacts protein L14. Forms a bridge to the 30S subunit in the 70S ribosome, contacting the 16S rRNA.

Functionally, contacts the 16S rRNA of the 30S subunit (part of bridge B6), connecting the 2 subunits. The sequence is that of Large ribosomal subunit protein bL19 (rplS) from Thermus thermophilus (strain ATCC 27634 / DSM 579 / HB8).